A 678-amino-acid polypeptide reads, in one-letter code: Electrogenic aspartate/glutamate antiporter SLC25A12, mitochondrial (678 aa).

A2 is modified (N-acetylalanine). The interval 2 to 294 (AVKVQTTKRG…TLADIERIAP (293 aa)) is regulatory N-terminal domain. Residues 2 to 329 (AVKVQTTKRG…WLQIAESAYR (328 aa)) lie on the Mitochondrial intermembrane side of the membrane. Residues D65, T67, D69, L71, and E76 each contribute to the Ca(2+) site. EF-hand domains are found at residues 65–76 (DQTKDGLISYQE), 86–121 (APDS…TIIH), 125–155 (PFNW…QFLQ), and 157–192 (LQLE…IRSH). The interval 295–310 (LAEGALPYNLAELQRQ) is linker loop domain. The interval 320–612 (WLQIAESAYR…RWFYIDFGGL (293 aa)) is carrier domain. 3 Solcar repeats span residues 324–416 (AESA…VRDK), 424–508 (VPLP…CKLL), and 516–604 (VGGL…LQRW). The chain crosses the membrane as a helical span at residues 330–347 (FTLGSVAGAVGATAVYPI). The Mitochondrial matrix portion of the chain corresponds to 348–390 (DLVKTRMQNQRGSGSVVGELMYKNSFDCFKKVLRYEGFFGLYR). Residues 391-410 (GLIPQLIGVAPEKAIKLTVN) traverse the membrane as a helical segment. The Mitochondrial intermembrane portion of the chain corresponds to 411-433 (DFVRDKFTRRDGSVPLPAEVLAG). Residues 434–447 (GCAGGSQVIFTNPL) traverse the membrane as a helical segment. Topologically, residues 448–482 (EIVKIRLQVAGEITTGPRVSALNVLRDLGIFGLYK) are mitochondrial matrix. The chain crosses the membrane as a helical span at residues 483–502 (GAKACFLRDIPFSAIYFPVY). Topologically, residues 503–521 (AHCKLLLADENGHVGGLNL) are mitochondrial intermembrane. The helical transmembrane segment at 522 to 539 (LAAGAMAGVPAASLVTPA) threads the bilayer. Over 540–578 (DVIKTRLQVAARAGQTTYSGVIDCFRKILREEGPSAFWK) the chain is Mitochondrial matrix. A helical transmembrane segment spans residues 579-598 (GTAARVFRSSPQFGVTLVTY). Over 599-678 (ELLQRWFYID…QPKAAVAATQ (80 aa)) the chain is Mitochondrial intermembrane. Residues 613 to 675 (KPAGSEPTPK…AVVQPKAAVA (63 aa)) form a C-terminal domain region.

It belongs to the mitochondrial carrier (TC 2.A.29) family. As to quaternary structure, homodimer (via N-terminus). As to expression, expressed predominantly in the heart and skeletal muscle, weakly in brain and kidney.

The protein resides in the mitochondrion inner membrane. The catalysed reaction is L-aspartate(in) + L-glutamate(out) + H(+)(out) = L-aspartate(out) + L-glutamate(in) + H(+)(in). It catalyses the reaction 3-sulfino-L-alanine(out) + L-glutamate(in) + H(+)(in) = 3-sulfino-L-alanine(in) + L-glutamate(out) + H(+)(out). It carries out the reaction 3-sulfino-L-alanine(out) + L-aspartate(in) = 3-sulfino-L-alanine(in) + L-aspartate(out). Activated by calcium-binding in the mitochondrial intermembrane space. Inhibited by pyridoxal 5'-phosphate, bathophenathroline, mercurials, diethyl pyrocarbonate and N-ethylmaleimide. Functionally, mitochondrial electrogenic aspartate/glutamate antiporter that favors efflux of aspartate and entry of glutamate and proton within the mitochondria as part of the malate-aspartate shuttle. Also mediates the uptake of L-cysteinesulfinate (3-sulfino-L-alanine) by mitochondria in exchange of L-glutamate and proton. Can also exchange L-cysteinesulfinate with aspartate in their anionic form without any proton translocation. Lacks transport activity towards L-glutamine or gamma-aminobutyric acid (GABA). The sequence is that of Electrogenic aspartate/glutamate antiporter SLC25A12, mitochondrial from Homo sapiens (Human).